The sequence spans 358 residues: Peptide chain release factor 1 (358 aa).

Glutamine 235 bears the N5-methylglutamine mark.

Belongs to the prokaryotic/mitochondrial release factor family. Methylated by PrmC. Methylation increases the termination efficiency of RF1.

The protein localises to the cytoplasm. In terms of biological role, peptide chain release factor 1 directs the termination of translation in response to the peptide chain termination codons UAG and UAA. The chain is Peptide chain release factor 1 from Neisseria meningitidis serogroup B (strain ATCC BAA-335 / MC58).